A 457-amino-acid polypeptide reads, in one-letter code: Succinate-semialdehyde dehydrogenase [NADP(+)] (457 aa).

NADP(+) is bound by residues 133–134, 157–160, and 209–210; these read WN, KHAS, and GS. Residue glutamate 231 is the Proton acceptor of the active site. Leucine 232 is an NADP(+) binding site. Catalysis depends on cysteine 265, which acts as the Nucleophile. NADP(+) is bound at residue glutamate 362.

The protein belongs to the aldehyde dehydrogenase family.

The catalysed reaction is succinate semialdehyde + NADP(+) + H2O = succinate + NADPH + 2 H(+). In terms of biological role, catalyzes the NADP(+)-dependent oxidation of succinate semialdehyde to succinate. It is believed to be the main source of succinate semialdehyde dehydrogenase activity in Mycobacterium. This is Succinate-semialdehyde dehydrogenase [NADP(+)] (gabD1) from Mycobacterium leprae (strain TN).